The primary structure comprises 168 residues: Endoribonuclease YbeY (168 aa).

Positions 123, 127, and 133 each coordinate Zn(2+).

Belongs to the endoribonuclease YbeY family. Zn(2+) is required as a cofactor.

It localises to the cytoplasm. In terms of biological role, single strand-specific metallo-endoribonuclease involved in late-stage 70S ribosome quality control and in maturation of the 3' terminus of the 16S rRNA. This is Endoribonuclease YbeY from Francisella tularensis subsp. tularensis (strain SCHU S4 / Schu 4).